The following is a 1400-amino-acid chain: DNA-directed RNA polymerase subunit beta' (1400 aa).

Positions 71, 73, 86, and 89 each coordinate Zn(2+). Aspartate 462, aspartate 464, and aspartate 466 together coordinate Mg(2+). 4 residues coordinate Zn(2+): cysteine 811, cysteine 885, cysteine 892, and cysteine 895.

It belongs to the RNA polymerase beta' chain family. In terms of assembly, the RNAP catalytic core consists of 2 alpha, 1 beta, 1 beta' and 1 omega subunit. When a sigma factor is associated with the core the holoenzyme is formed, which can initiate transcription. Mg(2+) is required as a cofactor. The cofactor is Zn(2+).

It catalyses the reaction RNA(n) + a ribonucleoside 5'-triphosphate = RNA(n+1) + diphosphate. DNA-dependent RNA polymerase catalyzes the transcription of DNA into RNA using the four ribonucleoside triphosphates as substrates. In Brucella ovis (strain ATCC 25840 / 63/290 / NCTC 10512), this protein is DNA-directed RNA polymerase subunit beta'.